The sequence spans 293 residues: MAPSQLPPIFNPTPQDIEMLLAAQCHLGSKNLQVHMEPYLWKTRPDGVNVINVGKTWEKILLAARIIAAIDNPADICVISARPYGQRAVLKFASHTGATAIAGRFTPGNFTNYITRSFKEPRLIVVTDPRTDAQAIKEASYVNIPVIALCDTDSPTDFVDVAIPTNNKGRHAIGLIWWLLAREVLRLRGTLANREVDWDVVVDLYFYRDPEAEENKEVAEEKVASAEDVGAGAIESGFAAESWDAQGAAAPAAFAAAGATSWEADGGDWAASSAPAPGGENWAEAQPAEGAKW.

The segment at 265–293 (DGGDWAASSAPAPGGENWAEAQPAEGAKW) is disordered.

This sequence belongs to the universal ribosomal protein uS2 family. In terms of assembly, component of the small ribosomal subunit. Mature ribosomes consist of a small (40S) and a large (60S) subunit. The 40S subunit contains about 33 different proteins and 1 molecule of RNA (18S). The 60S subunit contains about 49 different proteins and 3 molecules of RNA (25S, 5.8S and 5S). Interacts with rps21.

It is found in the cytoplasm. In terms of biological role, required for the assembly and/or stability of the 40S ribosomal subunit. Required for the processing of the 20S rRNA-precursor to mature 18S rRNA in a late step of the maturation of 40S ribosomal subunits. The chain is Small ribosomal subunit protein uS2 (rps0) from Emericella nidulans (strain FGSC A4 / ATCC 38163 / CBS 112.46 / NRRL 194 / M139) (Aspergillus nidulans).